The sequence spans 59 residues: Large ribosomal subunit protein bL35 (59 aa).

Disordered stretches follow at residues 1-22 and 30-49; these read MKVK…IKRK and APHK…TVSA. Positions 30–43 are enriched in basic residues; it reads APHKTTKQKRHLRK.

Belongs to the bacterial ribosomal protein bL35 family.

This chain is Large ribosomal subunit protein bL35 (rpmI), found in Mycoplasma pneumoniae (strain ATCC 29342 / M129 / Subtype 1) (Mycoplasmoides pneumoniae).